A 478-amino-acid chain; its full sequence is Microfibrillar-associated protein 1 (478 aa).

Over residues methionine 1 to isoleucine 20 the composition is skewed to low complexity. 2 disordered regions span residues methionine 1–threonine 276 and asparagine 456–glutamate 478. Over residues serine 53–phenylalanine 62 the composition is skewed to acidic residues. Basic and acidic residues predominate over residues aspartate 107–arginine 128. Residues isoleucine 140–glycine 153 are compositionally biased toward acidic residues. The span at arginine 160 to glutamate 170 shows a compositional bias: polar residues. Residues serine 171–glutamate 181 show a composition bias toward acidic residues. A compositionally biased stretch (basic and acidic residues) spans glutamine 197–glutamate 212. A compositionally biased stretch (acidic residues) spans serine 214 to asparagine 231. Positions glutamate 229–glutamate 478 are interaction with Prp38. Residues arginine 245 to alanine 268 show a composition bias toward basic and acidic residues.

It belongs to the MFAP1 family. Component of the spliceosome B complex. Interacts (via C-terminus) with Prp38.

The protein localises to the nucleus. Required for pre-mRNA splicing. The sequence is that of Microfibrillar-associated protein 1 from Drosophila melanogaster (Fruit fly).